The primary structure comprises 492 residues: uncharacterized protein (492 aa).

Residue 266 to 273 (GIQGTGKS) coordinates ATP.

The protein belongs to the AAA ATPase family. Highly divergent.

It is found in the plastid. Its subcellular location is the chloroplast. This is an uncharacterized protein from Pyropia yezoensis (Susabi-nori).